A 105-amino-acid chain; its full sequence is U-scoloptoxin(05)-Ssd1a (105 aa).

An N-terminal signal peptide occupies residues 1-24; it reads MKEAVKMSCLCIFVFLFLFSLTDA. The disordered stretch occupies residues 79-105; sequence HVPESNQKDGKVSTHMSSCNTDGCNAN. Over residues 92-105 the composition is skewed to polar residues; that stretch reads THMSSCNTDGCNAN.

It belongs to the scoloptoxin-05 family. In terms of processing, contains 4 disulfide bonds. As to expression, expressed by the venom gland.

It is found in the secreted. This chain is U-scoloptoxin(05)-Ssd1a, found in Scolopendra dehaani (Thai centipede).